An 859-amino-acid chain; its full sequence is Leucine--tRNA ligase (859 aa).

The short motif at 42 to 52 (PYPSGRLHMGH) is the 'HIGH' region element. The 'KMSKS' region signature appears at 618–622 (KMSKS). Lysine 621 is an ATP binding site.

It belongs to the class-I aminoacyl-tRNA synthetase family.

The protein resides in the cytoplasm. The catalysed reaction is tRNA(Leu) + L-leucine + ATP = L-leucyl-tRNA(Leu) + AMP + diphosphate. This chain is Leucine--tRNA ligase, found in Shewanella baltica (strain OS155 / ATCC BAA-1091).